Consider the following 79-residue polypeptide: UPF0180 protein Bcer98_1118 (79 aa).

This sequence belongs to the UPF0180 family.

The polypeptide is UPF0180 protein Bcer98_1118 (Bacillus cytotoxicus (strain DSM 22905 / CIP 110041 / 391-98 / NVH 391-98)).